The chain runs to 643 residues: Protein disulfide-isomerase A4 (643 aa).

The signal sequence occupies residues 1–20; sequence MKLRKAWLLVLLLALTQLLA. Thioredoxin domains lie at 21-167 and 167-299; these read AASA…EVSQ and QPDW…EFLK. A disordered region spans residues 24–58; it reads AEDAHEDASDSENPIEDDDDEEEDEEDEDDLEVKE. A compositionally biased stretch (acidic residues) spans 32–56; the sequence is SDSENPIEDDDDEEEDEEDEDDLEV. The CXXC motif lies at 89-92; the sequence is CGHC. Intrachain disulfides connect Cys-89-Cys-92 and Cys-204-Cys-207. Residue Lys-364 is modified to N6-acetyllysine. The Thioredoxin 3 domain occupies 503-634; the sequence is FKKGKLKPVI…LSKFIDEHAT (132 aa). The short motif at 553–556 is the CXXC element; that stretch reads CGHC. A disulfide bridge links Cys-553 with Cys-556. The short motif at 640 to 643 is the Prevents secretion from ER element; that stretch reads KEEL.

The protein belongs to the protein disulfide isomerase family. Part of a large chaperone multiprotein complex comprising DNAJB11, HSP90B1, HSPA5, HYOU, PDIA2, PDIA4, PDIA6, PPIB, SDF2L1, UGGT1 and very small amounts of ERP29, but not, or at very low levels, CALR nor CANX. Component of a complex containing at least CRELD2, MANF, MATN3 and PDIA4. O-glycosylated.

It localises to the endoplasmic reticulum lumen. The protein resides in the melanosome. The enzyme catalyses Catalyzes the rearrangement of -S-S- bonds in proteins.. The protein is Protein disulfide-isomerase A4 (Pdia4) of Rattus norvegicus (Rat).